The sequence spans 217 residues: Ribonuclease T (217 aa).

Residues 20-194 (VVIDIETAGF…YDTQQTANLF (175 aa)) form the Exonuclease domain. Residues D23, E25, H181, and D186 each contribute to the Mg(2+) site. Catalysis depends on H181, which acts as the Proton donor/acceptor.

It belongs to the RNase T family. Homodimer. Mg(2+) serves as cofactor.

Trims short 3' overhangs of a variety of RNA species, leaving a one or two nucleotide 3' overhang. Responsible for the end-turnover of tRNA: specifically removes the terminal AMP residue from uncharged tRNA (tRNA-C-C-A). Also appears to be involved in tRNA biosynthesis. This is Ribonuclease T from Buchnera aphidicola subsp. Baizongia pistaciae (strain Bp).